Reading from the N-terminus, the 1663-residue chain is Complement C3 (1663 aa).

A signal peptide spans 1–24 (MGPASGSQLLVLLLLLASSPLALG). Serine 40 carries the phosphoserine modification. Intrachain disulfides connect cysteine 559/cysteine 816, cysteine 626/cysteine 661, cysteine 693/cysteine 720, cysteine 694/cysteine 727, cysteine 707/cysteine 728, cysteine 873/cysteine 1513, cysteine 1101/cysteine 1158, cysteine 1358/cysteine 1489, cysteine 1389/cysteine 1458, cysteine 1506/cysteine 1511, cysteine 1518/cysteine 1590, cysteine 1537/cysteine 1661, and cysteine 1637/cysteine 1646. Serine 671 carries the phosphoserine modification. One can recognise an Anaphylatoxin-like domain in the interval 693-728 (CCEDGMRDIPMRYSCQRRARLITQGENCIKAFIDCC). N-linked (GlcNAc...) asparagine glycosylation is present at asparagine 939. Residue serine 968 is modified to Phosphoserine. Residues 1010–1013 (CGEQ) constitute a cross-link (isoglutamyl cysteine thioester (Cys-Gln)). At serine 1321 the chain carries Phosphoserine. The region spanning 1518–1661 (CFMQQSQEKI…FTESMVVYGC (144 aa)) is the NTR domain. Position 1573 is a phosphoserine (serine 1573). An N-linked (GlcNAc...) asparagine glycan is attached at asparagine 1617. The segment at 1634 to 1659 (AEECQDQKYQKQCEELGAFTESMVVY) is interaction with CFP/properdin.

As to quaternary structure, in absence of complement activation, the C3 precursor is first processed by the removal of 4 Arg residues, forming two chains, beta and alpha, linked by a disulfide bond. Complement C3b is composed of complement C3b and complement C3 beta chains that are associated via disulfide bonds. Non-enzymatic component of the C5 convertase, also named C4bC2bC3b, composed of the serine protease complement C2b (C2), complement C3b, as well as complement C4b (C4). Non-enzymatic component of the C5 convertase of the alternative complement pathways composed of the serine protease complement CFB and complement C3b. Interacts with CFP; interaction takes place together with CFB in the alternative complement system and allows the complex to become active. Interacts with CR1 (via Sushi 8 and Sushi 9 domains). Interacts with CFH. In terms of assembly, interacts with CFH. Interacts with CR2. As to quaternary structure, during pregnancy, C3dg exists as a complex (probably a 2:2:2 heterohexamer) with AGT and the proform of PRG2. Interacts with CR2 (via the N-terminal Sushi domains 1 and 2). Post-translationally, C3 precursor is first processed by the removal of 4 Arg residues, forming two chains, beta and alpha, linked by a disulfide bond. During activation of the complement systems, the alpha chain is cleaved into C3a and C3b by the C3 convertase: C3b stays linked to the beta chain, while C3a is released in the plasma. The alpha chain is cleaved by the serine protease complement C2b component of the C3 convertase to generate C3a and C3b following activation by the classical, lectin and GZMK complement systems. The alpha chain is cleaved by CFB component of the C3 convertase to generate C3a and C3b following activation by the alternative complement system. C3a is further processed by carboxypeptidases to release the C-terminal arginine residue generating the acylation stimulating protein (ASP). Levels of ASP are increased in adipocytes in the postprandial period and by insulin and dietary chylomicrons. In terms of processing, complement C3b is rapidly split in two positions by factor I (CFI) and a cofactor (CFH) to form iC3b (inactivated C3b) and C3f which is released. CFI and CFH catalyze proteolytic degradation of already-deposited complement C3b. Then iC3b is slowly cleaved (possibly by CFI) to form C3c (beta chain + alpha' chain fragment 1 + alpha' chain fragment 2), C3dg and C3f. Other proteases produce other fragments such as C3d or C3g. Post-translationally, upon activation, the internal thioester bond reacts with carbohydrate antigens on the target surface to form amide or ester bonds, leading to covalent association with the surface of pathogens. Complement C3b interacts with complement C4b via a thioester linkage. In terms of processing, phosphorylated by FAM20C in the extracellular medium.

Its subcellular location is the secreted. The protein localises to the cell surface. Its activity is regulated as follows. Complement activation is inhibited by VSIG4. Its function is as follows. Precursor of non-enzymatic components of the classical, alternative, lectin and GZMK complement pathways, which consist in a cascade of proteins that leads to phagocytosis and breakdown of pathogens and signaling that strengthens the adaptive immune system. Non-enzymatic component of C5 convertase. Generated following cleavage by C3 convertase, it covalently attaches to the surface of pathogens, where it acts as an opsonin that marks the surface of antigens for removal. Complement C3b binds covalently via its reactive thioester, to cell surface carbohydrates or immune aggregates. Together with complement C4b, it then recruits the serine protease complement C2b to form the C5 convertase, which cleaves and activate C5, the next component of the complement pathways. In the alternative complement pathway, recruits the serine protease CFB to form the C5 convertase that cleaves and activates C5. Functionally, mediator of local inflammatory process released following cleavage by C3 convertase. Acts by binding to its receptor, C3AR1, activating G protein-coupled receptor signaling, promoting the phosphorylation, ARRB2-mediated internalization and endocytosis of C3AR1. C3a anaphylatoxin stimulates the activation of immune cells such as mast cells and basophilic leukocytes to release inflammation agents, such as cytokines, chemokines and histamine, which promote inflammation development. Also acts as potent chemoattractant for the migration of macrophages and neutrophils to the inflamed tissues, resulting in neutralization of the inflammatory triggers by multiple ways, such as phagocytosis and generation of reactive oxidants. In terms of biological role, adipogenic hormone that stimulates triglyceride synthesis and glucose transport in adipocytes, regulating fat storage and playing a role in postprandial triglyceride clearance. Appears to stimulate triglyceride synthesis via activation of the PLC, MAPK and AKT signaling pathways. Acts by binding to its receptor, C5AR2, activating G protein-coupled receptor signaling, promoting the phosphorylation, ARRB2-mediated internalization and endocytosis of C5AR2. Its function is as follows. Acts as a chemoattractant for neutrophils in chronic inflammation. This chain is Complement C3, found in Mus musculus (Mouse).